A 285-amino-acid chain; its full sequence is Chemotaxis protein LafT (285 aa).

The next 4 membrane-spanning stretches (helical) occupy residues 4–23 (FLGV…WAGG), 34–51 (FLII…GNPP), 171–191 (ALPG…MQAI), and 201–222 (HVAA…GLDP). Over 223 to 285 (LSNAMAQRVK…MEKWLAEQEG (63 aa)) the chain is Cytoplasmic.

Belongs to the MotA family.

It is found in the cell inner membrane. Required for rotation of the flagellar motor. Probable transmembrane proton channel. In Vibrio parahaemolyticus serotype O3:K6 (strain RIMD 2210633), this protein is Chemotaxis protein LafT (lafT).